The following is a 125-amino-acid chain: Type-4 ice-structuring protein (125 aa).

Positions 1–20 are cleaved as a signal peptide; it reads MKYTLIAAIVVLALAQGTLA.

The protein belongs to the apolipoprotein A1/A4/E family.

The protein localises to the secreted. In terms of biological role, antifreeze proteins lower the blood freezing point. This Gadus morhua (Atlantic cod) protein is Type-4 ice-structuring protein.